We begin with the raw amino-acid sequence, 111 residues long: Prefoldin subunit 2 (111 aa).

Coiled-coil stretches lie at residues 1-36 and 72-92; these read MEQR…KDEH and LETK…TLIQ.

The protein belongs to the prefoldin subunit beta family. In terms of assembly, heterohexamer of two PFD-alpha type and four PFD-beta type subunits.

Its subcellular location is the cytoplasm. Its function is as follows. Binds specifically to cytosolic chaperonin (c-CPN) and transfers target proteins to it. Binds to nascent polypeptide chain and promotes folding in an environment in which there are many competing pathways for nonnative proteins. The protein is Prefoldin subunit 2 (GIM4) of Saccharomyces cerevisiae (strain ATCC 204508 / S288c) (Baker's yeast).